A 275-amino-acid polypeptide reads, in one-letter code: Large ribosomal subunit protein uL2 (275 aa).

Residues 208–275 form a disordered region; sequence AGAKRWRGRR…NMIIRDRRKK (68 aa). 2 stretches are compositionally biased toward basic residues: residues 209–219 and 254–263; these read GAKRWRGRRPT and KGYKTRRNKR.

This sequence belongs to the universal ribosomal protein uL2 family. In terms of assembly, part of the 50S ribosomal subunit. Forms a bridge to the 30S subunit in the 70S ribosome.

One of the primary rRNA binding proteins. Required for association of the 30S and 50S subunits to form the 70S ribosome, for tRNA binding and peptide bond formation. It has been suggested to have peptidyltransferase activity; this is somewhat controversial. Makes several contacts with the 16S rRNA in the 70S ribosome. The protein is Large ribosomal subunit protein uL2 of Coxiella burnetii (strain CbuK_Q154) (Coxiella burnetii (strain Q154)).